We begin with the raw amino-acid sequence, 343 residues long: NAD-dependent deacetylase sir2E (343 aa).

A Deacetylase sirtuin-type domain is found at 27-300 (YLKNKKEFEF…PLLERQLLYE (274 aa)). His-152 acts as the Proton acceptor in catalysis. Residues Cys-160, Cys-165, Cys-200, and Cys-203 each contribute to the Zn(2+) site.

This sequence belongs to the sirtuin family.

Its subcellular location is the nucleus. It catalyses the reaction N(6)-acetyl-L-lysyl-[protein] + NAD(+) + H2O = 2''-O-acetyl-ADP-D-ribose + nicotinamide + L-lysyl-[protein]. Functionally, NAD-dependent deacetylase, which plays an important role in the regulation of transcriptional repression. May play a role in cell cycle. When overexpressed, the cell cycle is accelerated. The chain is NAD-dependent deacetylase sir2E (sir2E) from Dictyostelium discoideum (Social amoeba).